The primary structure comprises 81 residues: NAD(P)H-quinone oxidoreductase subunit O (81 aa).

Belongs to the complex I NdhO subunit family. In terms of assembly, NDH-1 can be composed of about 15 different subunits; different subcomplexes with different compositions have been identified which probably have different functions.

The protein localises to the cellular thylakoid membrane. It carries out the reaction a plastoquinone + NADH + (n+1) H(+)(in) = a plastoquinol + NAD(+) + n H(+)(out). It catalyses the reaction a plastoquinone + NADPH + (n+1) H(+)(in) = a plastoquinol + NADP(+) + n H(+)(out). NDH-1 shuttles electrons from an unknown electron donor, via FMN and iron-sulfur (Fe-S) centers, to quinones in the respiratory and/or the photosynthetic chain. The immediate electron acceptor for the enzyme in this species is believed to be plastoquinone. Couples the redox reaction to proton translocation, and thus conserves the redox energy in a proton gradient. Cyanobacterial NDH-1 also plays a role in inorganic carbon-concentration. The sequence is that of NAD(P)H-quinone oxidoreductase subunit O from Prochlorococcus marinus (strain MIT 9303).